The following is a 95-amino-acid chain: uncharacterized protein (95 aa).

The disordered stretch occupies residues 65 to 95 (DANDYDTTTTEEEDSSTTTTTDNETNSDDDI).

This is an uncharacterized protein from Lymantria dispar multicapsid nuclear polyhedrosis virus (LdMNPV).